Here is a 385-residue protein sequence, read N- to C-terminus: Trans-enoyl reductase poxH (385 aa).

64–67 (QPYS) contacts NADP(+). 156–163 (PDPAAPPI) provides a ligand contact to substrate. NADP(+)-binding positions include 199–202 (STSV), 223–226 (SGTD), Tyr241, and 289–290 (LG). 309–313 (HMAPL) serves as a coordination point for substrate. 372–373 (KR) lines the NADP(+) pocket.

The protein belongs to the zinc-containing alcohol dehydrogenase family. As to quaternary structure, monomer.

The protein operates within secondary metabolite biosynthesis. Its function is as follows. Trans-enoyl reductase; part of the gene cluster that mediates the biosynthesis of oxaleimides, cytotoxic compounds containing an unusual disubstituted succinimide moiety. The first step of the pathway is provided by the HR-PKS poxF that serves in a new mode of collaborative biosynthesis with the PKS-NRPS poxE, by providing the olefin containing amino acid substrate via the synthesis of an ACP-bound dec-4-enoate. The cytochrome P450 monooxygenase poxM-catalyzed oxidation at the alpha-position creates the enzyme-bound 2-hydroxydec-4-enoyl-ACP thioester, which may be prone to spontaneous hydrolysis to yield 2-hydroxydec-4-enoic acid due to increased electrophilicity of the carbonyl. 2-hydroxydec-4-enoic acid can then be further oxidized by poxM to yield the alpha-ketoacid 2-oxodec-4-enoicacid, which is reductively aminated by the aminotransferase poxL to yield (S,E)-2-aminodec-4-enoic acid. The Hybrid PKS-NRPS synthetase poxE then performs condensation between the octaketide product of its PKS modules and the amino group of (S,E)-2-aminodec-4-enoic acid which is activated and incorporated by the adenylation domain. The resulting aminoacyl product can be cyclized by the Diels-Alderase PoxQ and reductively released by the reductive (R) domain of poxE to yield an aldehyde intermediate. The released aldehyde is then substrate for a Knoevenagel condensation by the hydrolyase poxO followed by an oxidation at the 5-position of the pyrrolidone ring. The presence of the olefin from the amino acid building block allows for migration of the substituted allyl group to occur. This allylic transposition reaction takes place in a conjugate addition, semipinacol-like fashion to yield a succinimide intermediate. Iterative two-electron oxidations of the C7 methyl of the succinimide intermediate to the carboxylic acid can be catalyzed by one of two remaining cytochrome P450 monooxygenasess poxC or poxD to yield oxaleimide A. Subsequent oxidation yields the maleimide scaffold oxaleimide I. Both oxaleimide A and oxaleimide I can undergo oxidative modifications in the decalin ring to yield the series of products oxaleimides B to H. This is Trans-enoyl reductase poxH from Penicillium oxalicum (strain 114-2 / CGMCC 5302) (Penicillium decumbens).